Reading from the N-terminus, the 400-residue chain is Chalcone synthase C2 (400 aa).

Residue Cys-168 is part of the active site.

It belongs to the thiolase-like superfamily. Chalcone/stilbene synthases family.

The catalysed reaction is (E)-4-coumaroyl-CoA + 3 malonyl-CoA + 3 H(+) = 2',4,4',6'-tetrahydroxychalcone + 3 CO2 + 4 CoA. Its pathway is secondary metabolite biosynthesis; flavonoid biosynthesis. Its function is as follows. The primary product of this enzyme is 4,2',4',6'-tetrahydroxychalcone (also termed naringenin-chalcone or chalcone) which can under specific conditions spontaneously isomerize into naringenin. In Zea mays (Maize), this protein is Chalcone synthase C2 (C2).